We begin with the raw amino-acid sequence, 42 residues long: uncharacterized protein (42 aa).

Residues 5–27 (FLHTNITIIPHSVLYVSLSYYII) form a helical membrane-spanning segment.

It localises to the membrane. This is an uncharacterized protein from Saccharomyces cerevisiae (strain ATCC 204508 / S288c) (Baker's yeast).